A 276-amino-acid chain; its full sequence is Formamidopyrimidine-DNA glycosylase (276 aa).

Catalysis depends on P2, which acts as the Schiff-base intermediate with DNA. E3 (proton donor) is an active-site residue. K58 acts as the Proton donor; for beta-elimination activity in catalysis. The DNA site is built by H92, R111, and R154. Residues H239–V273 form an FPG-type zinc finger. Residue R263 is the Proton donor; for delta-elimination activity of the active site.

Belongs to the FPG family. Monomer. Requires Zn(2+) as cofactor.

It catalyses the reaction Hydrolysis of DNA containing ring-opened 7-methylguanine residues, releasing 2,6-diamino-4-hydroxy-5-(N-methyl)formamidopyrimidine.. The catalysed reaction is 2'-deoxyribonucleotide-(2'-deoxyribose 5'-phosphate)-2'-deoxyribonucleotide-DNA = a 3'-end 2'-deoxyribonucleotide-(2,3-dehydro-2,3-deoxyribose 5'-phosphate)-DNA + a 5'-end 5'-phospho-2'-deoxyribonucleoside-DNA + H(+). Functionally, involved in base excision repair of DNA damaged by oxidation or by mutagenic agents. Acts as a DNA glycosylase that recognizes and removes damaged bases. Has a preference for oxidized purines, such as 7,8-dihydro-8-oxoguanine (8-oxoG). Has AP (apurinic/apyrimidinic) lyase activity and introduces nicks in the DNA strand. Cleaves the DNA backbone by beta-delta elimination to generate a single-strand break at the site of the removed base with both 3'- and 5'-phosphates. This is Formamidopyrimidine-DNA glycosylase from Ligilactobacillus salivarius (strain UCC118) (Lactobacillus salivarius).